Here is an 821-residue protein sequence, read N- to C-terminus: Probable E3 ubiquitin-protein ligase hulA (821 aa).

Positions 1 to 112 (MGSNLPAQPN…QMGGDEMLTR (112 aa)) constitute a C2 domain. 2 disordered regions span residues 140–240 (PNQA…WERR) and 255–359 (RTTT…YFVD). 4 stretches are compositionally biased toward polar residues: residues 151 to 173 (AQSS…SVSP), 181 to 201 (AASN…PTST), 217 to 228 (QGSRTNLSSFED), and 255 to 272 (RTTT…QTQR). One can recognise a WW 1 domain in the interval 231-264 (GRLPAGWERREDNLGRTYYVDHNTRTTTWTRPSS). Over residues 281-296 (LERRAHQSRMLPEDRT) the composition is skewed to basic and acidic residues. The span at 297–306 (GANSPNLQES) shows a compositional bias: polar residues. Positions 311–339 (PQQAHTPPAGGSASAVSMMATGATTAGTG) are enriched in low complexity. 2 WW domains span residues 339–372 (GELP…DPRR) and 399–432 (GPLP…DPRL). In terms of domain architecture, HECT spans 488 to 821 (SASDLKKRLM…VEETLGFGQE (334 aa)). The active-site Glycyl thioester intermediate is the Cys789.

It belongs to the RSP5/NEDD4 family. In terms of assembly, interacts with creD.

Its subcellular location is the cytoplasm. It catalyses the reaction S-ubiquitinyl-[E2 ubiquitin-conjugating enzyme]-L-cysteine + [acceptor protein]-L-lysine = [E2 ubiquitin-conjugating enzyme]-L-cysteine + N(6)-ubiquitinyl-[acceptor protein]-L-lysine.. Its pathway is protein modification; protein ubiquitination. E3 ubiquitin-protein ligase which accepts ubiquitin from an E2 ubiquitin-conjugating enzyme in the form of a thioester and then directly transfers the ubiquitin to targeted substrates. Probably involved in the regulatory network controlling carbon source utilization. This chain is Probable E3 ubiquitin-protein ligase hulA (hulA), found in Aspergillus niger (strain ATCC MYA-4892 / CBS 513.88 / FGSC A1513).